Here is an 814-residue protein sequence, read N- to C-terminus: Phenylalanine--tRNA ligase beta subunit (814 aa).

In terms of domain architecture, tRNA-binding spans 39-153 (SARAKGVVVG…ELPALGAPVA (115 aa)). The B5 domain occupies 414-498 (ADASSVLLRR…RLVGFDRFGA (85 aa)). Residues D476, D482, E485, and E486 each contribute to the Mg(2+) site. Residues 720–813 (PTVPASERDL…LVKQHGAELR (94 aa)) form the FDX-ACB domain.

The protein belongs to the phenylalanyl-tRNA synthetase beta subunit family. Type 1 subfamily. Tetramer of two alpha and two beta subunits. The cofactor is Mg(2+).

The protein resides in the cytoplasm. It carries out the reaction tRNA(Phe) + L-phenylalanine + ATP = L-phenylalanyl-tRNA(Phe) + AMP + diphosphate + H(+). The protein is Phenylalanine--tRNA ligase beta subunit of Parasynechococcus marenigrum (strain WH8102).